The sequence spans 252 residues: Isoprenyl transferase (252 aa).

Residue D32 is part of the active site. D32 is a Mg(2+) binding site. Residues 33-36 (GNGR), W37, R45, H49, and 77-79 (STE) each bind substrate. N80 serves as the catalytic Proton acceptor. Substrate is bound by residues W81, R83, R200, and 206 to 208 (RLS). E219 is a binding site for Mg(2+).

Belongs to the UPP synthase family. In terms of assembly, homodimer. The cofactor is Mg(2+).

Catalyzes the condensation of isopentenyl diphosphate (IPP) with allylic pyrophosphates generating different type of terpenoids. The sequence is that of Isoprenyl transferase from Listeria monocytogenes serotype 4b (strain F2365).